A 437-amino-acid chain; its full sequence is Nuclear envelope integral membrane protein 1 (437 aa).

An N-terminal signal peptide occupies residues 1-44; sequence MAGGIKVSVWSAVGPGPRCWGAGGGGGATWLLLVVAGCVVCGSA. N-linked (GlcNAc...) asparagine glycosylation is present at N123. A run of 5 helical transmembrane segments spans residues 159–179, 183–203, 214–234, 244–264, and 288–308; these read PKLF…DLLS, IFYY…IVIF, PIYV…QLVF, YWHY…AVCY, and GLMY…VIAL. The a; required for its colocalization with lamins at the nuclear envelope stretch occupies residues 184 to 295; sequence FYYSTGMSVG…GLGLMYSSIQ (112 aa). A b; required for interaction with RAN-GTP region spans residues 334–403; it reads PVPPRLLTEE…LTPNEVSVHE (70 aa). Residues 334–437 form a required for nuclear localization region; it reads PVPPRLLTEE…PTFTQNNFLT (104 aa). 3 positions are modified to phosphoserine: S366, S419, and S420. The span at 415–425 shows a compositional bias: acidic residues; that stretch reads DEELSSEEEGS. The interval 415 to 437 is disordered; sequence DEELSSEEEGSEYPTFTQNNFLT. Residues 428 to 437 show a composition bias toward polar residues; it reads PTFTQNNFLT.

It belongs to the NEMP family. As to quaternary structure, homooligomer. Interacts with RAN-GTP. Interacts with EMD. Phosphorylated. Phosphorylation may regulate its interaction with RAN-GTP. As to expression, in the ovary, expression is strongest in primordial follicle oocytes and rapidly declines as oocytes mature and move from the cortex (at protein level).

Its subcellular location is the nucleus inner membrane. It is found in the nucleus envelope. Its function is as follows. Together with EMD, contributes to nuclear envelope stiffness in germ cells. Required for female fertility. Essential for normal erythropoiesis. Required for efficient nuclear envelope opening and enucleation during the late stages of erythroblast maturation. The chain is Nuclear envelope integral membrane protein 1 (Nemp1) from Mus musculus (Mouse).